A 237-amino-acid chain; its full sequence is Probable transcriptional regulatory protein Bpro_2928 (237 aa).

It belongs to the TACO1 family.

Its subcellular location is the cytoplasm. The chain is Probable transcriptional regulatory protein Bpro_2928 from Polaromonas sp. (strain JS666 / ATCC BAA-500).